Here is a 223-residue protein sequence, read N- to C-terminus: Cytidylate kinase (223 aa).

12–20 contributes to the ATP binding site; that stretch reads GPAGSGKST.

Belongs to the cytidylate kinase family. Type 1 subfamily.

It localises to the cytoplasm. It carries out the reaction CMP + ATP = CDP + ADP. The catalysed reaction is dCMP + ATP = dCDP + ADP. The chain is Cytidylate kinase from Aster yellows witches'-broom phytoplasma (strain AYWB).